We begin with the raw amino-acid sequence, 242 residues long: Tryptophan synthase alpha chain (242 aa).

Residues glutamate 31 and aspartate 42 each act as proton acceptor in the active site.

The protein belongs to the TrpA family. As to quaternary structure, tetramer of two alpha and two beta chains.

The catalysed reaction is (1S,2R)-1-C-(indol-3-yl)glycerol 3-phosphate + L-serine = D-glyceraldehyde 3-phosphate + L-tryptophan + H2O. The protein operates within amino-acid biosynthesis; L-tryptophan biosynthesis; L-tryptophan from chorismate: step 5/5. The alpha subunit is responsible for the aldol cleavage of indoleglycerol phosphate to indole and glyceraldehyde 3-phosphate. The polypeptide is Tryptophan synthase alpha chain (Staphylococcus aureus (strain USA300)).